The following is a 297-amino-acid chain: N-acetylneuraminate lyase (297 aa).

The aceneuramate site is built by serine 47 and threonine 48. The active-site Proton donor is the tyrosine 137. Lysine 165 (schiff-base intermediate with substrate) is an active-site residue. Aceneuramate-binding residues include threonine 167, glycine 189, aspartate 191, glutamate 192, and serine 208.

Belongs to the DapA family. NanA subfamily. In terms of assembly, homotetramer.

Its subcellular location is the cytoplasm. The enzyme catalyses aceneuramate = aldehydo-N-acetyl-D-mannosamine + pyruvate. The protein operates within amino-sugar metabolism; N-acetylneuraminate degradation; D-fructose 6-phosphate from N-acetylneuraminate: step 1/5. Functionally, catalyzes the reversible aldol cleavage of N-acetylneuraminic acid (sialic acid; Neu5Ac) to form pyruvate and N-acetylmannosamine (ManNAc) via a Schiff base intermediate. This Salmonella typhimurium (strain LT2 / SGSC1412 / ATCC 700720) protein is N-acetylneuraminate lyase.